A 40-amino-acid polypeptide reads, in one-letter code: Hemoglobin subunit alpha-2 (40 aa).

Residues 1–40 (VGPHLDDYGGEALHRNFEVYPQTKTYFPHFDASAGSNQLK) form the Globin domain.

This sequence belongs to the globin family. Heterotetramer of two alpha chains and two beta chains. Red blood cells.

Functionally, involved in oxygen transport from the lung to the various peripheral tissues. The sequence is that of Hemoglobin subunit alpha-2 from Saara hardwickii (Indian spiny-tailed lizard).